The chain runs to 289 residues: Phosphoribulokinase (289 aa).

Residue 12-20 (GSSGAGTTT) coordinates ATP.

Belongs to the phosphoribulokinase family.

The catalysed reaction is D-ribulose 5-phosphate + ATP = D-ribulose 1,5-bisphosphate + ADP + H(+). It participates in carbohydrate biosynthesis; Calvin cycle. This Sinorhizobium medicae (strain WSM419) (Ensifer medicae) protein is Phosphoribulokinase (cbbP).